Here is a 95-residue protein sequence, read N- to C-terminus: Selenoprotein K (95 aa).

The helical transmembrane segment at 20–42 threads the bilayer; it reads LSFITDFFWGIAEFVVLFFRTLL. Residues 47 to 95 are disordered; the sequence is KKRRGYGSSSDSRYDDGRGPPGNPPRRRMGRINHLQGPNPPPMAGGUGR. A non-standard amino acid (selenocysteine) is located at residue Sec93.

Belongs to the selenoprotein K family. As to quaternary structure, interacts with DERL1, DERL2, DERL3 and SELENOS. The SELENOK-SELENOS complex interacts with VCP. Interacts with ZDHHC6. In terms of processing, cleaved by CAPN2/m-calpain in resting macrophages but not in activated macrophages. Macrophage activation up-regulates expression of the calpain inhibitor CAST/calpastatin, resulting in inhibition of CAPN2 activity. Post-translationally, truncated SELENOK proteins produced by failed UGA/Sec decoding are ubiquitinated by the CRL2(KLHDC2) complex, which recognizes the diglycine (Gly-Gly) at the C-terminus of truncated SELENOK proteins.

The protein localises to the endoplasmic reticulum membrane. It localises to the cell membrane. Required for Ca(2+) flux in immune cells and plays a role in T-cell proliferation and in T-cell and neutrophil migration. Involved in endoplasmic reticulum-associated degradation (ERAD) of soluble glycosylated proteins. Required for palmitoylation and cell surface expression of CD36 and involved in macrophage uptake of low-density lipoprotein and in foam cell formation. Together with ZDHHC6, required for palmitoylation of ITPR1 in immune cells, leading to regulate ITPR1 stability and function. Plays a role in protection of cells from ER stress-induced apoptosis. Protects cells from oxidative stress when overexpressed in cardiomyocytes. In Bos taurus (Bovine), this protein is Selenoprotein K.